We begin with the raw amino-acid sequence, 148 residues long: Mobilization protein MobB (148 aa).

This protein is essential to promote the specific transfer of the plasmid in the presence of conjugative plasmids. This chain is Mobilization protein MobB (mobB), found in Escherichia coli.